The chain runs to 236 residues: 2-C-methyl-D-erythritol 4-phosphate cytidylyltransferase (236 aa).

The protein belongs to the IspD/TarI cytidylyltransferase family. IspD subfamily. Homodimer.

It catalyses the reaction 2-C-methyl-D-erythritol 4-phosphate + CTP + H(+) = 4-CDP-2-C-methyl-D-erythritol + diphosphate. It functions in the pathway isoprenoid biosynthesis; isopentenyl diphosphate biosynthesis via DXP pathway; isopentenyl diphosphate from 1-deoxy-D-xylulose 5-phosphate: step 2/6. Functionally, catalyzes the formation of 4-diphosphocytidyl-2-C-methyl-D-erythritol from CTP and 2-C-methyl-D-erythritol 4-phosphate (MEP). The protein is 2-C-methyl-D-erythritol 4-phosphate cytidylyltransferase of Cronobacter sakazakii (strain ATCC BAA-894) (Enterobacter sakazakii).